A 155-amino-acid polypeptide reads, in one-letter code: Large ribosomal subunit protein bL17 (155 aa).

This sequence belongs to the bacterial ribosomal protein bL17 family. Part of the 50S ribosomal subunit. Contacts protein L32.

This Bifidobacterium adolescentis (strain ATCC 15703 / DSM 20083 / NCTC 11814 / E194a) protein is Large ribosomal subunit protein bL17.